Reading from the N-terminus, the 195-residue chain is Replication restart protein PriC (195 aa).

The protein belongs to the PriC family. In terms of assembly, monomer. Component of the replication restart primosome, which is composed of PriA, PriB, PriC, DnaB and DnaT; DnaG primase associates transiently with this complex. Interacts with the C-terminus of SSB; this interaction is required to load the main replicative helicase onto substrate replication forks. Interacts with helicase DnaB alone and in the DnaB-DnaC complex, probably 1:1 binding with DnaB.

In terms of biological role, involved in the restart of stalled replication forks, which reloads the DnaB replicative helicase on sites other than the origin of replication. Recognizes abandoned replication forks and remodels DNA single-stranded binding protein (SSB) on ssDNA to uncover a loading site for DnaB. There are several restart pathways, the PriA-PriC pathway is a minor restart pathway. Part of the minor PriC-Rep pathway for restart of stalled replication forks, which has a different substrate specificity than PriA. Part of the major restart pathway with PriA, PriB, DnaB, DnaT and DnaG primase. priB and priC have redundant roles in the cell. The polypeptide is Replication restart protein PriC (Haemophilus influenzae (strain ATCC 51907 / DSM 11121 / KW20 / Rd)).